Consider the following 203-residue polypeptide: Recombination protein RecR (203 aa).

The segment at 56–71 (CAVCGNVSDNERCRIC) adopts a C4-type zinc-finger fold. Residues 79–179 (SVVCIVEEPK…TVTRIASGLP (101 aa)) enclose the Toprim domain.

Belongs to the RecR family.

In terms of biological role, may play a role in DNA repair. It seems to be involved in an RecBC-independent recombinational process of DNA repair. It may act with RecF and RecO. This is Recombination protein RecR from Mycobacterium bovis (strain ATCC BAA-935 / AF2122/97).